The chain runs to 257 residues: MDRIIEKLESGWWIVSHEQKLWLPYGELPHGLAANFDLVGQRALRIGEWQGEPVWLVLQHRRHDMGSVRQVIDQDAGLFQLAGRGVQLAEFYRSHKFCGYCGHPMHPSKTEWAMLCSHCRERYYPQIAPCIIVAIRREDSILLARHVRHRNGVHTVLAGFVEVGETLEQAVAREVMEESGIKVKNLRYVTSQPWPFPQSLMTAFMAEYDSGEIVIDPKELLEANWYRYDDLPLLPPPGTVARRLIEDTVAMCRAEYD.

Arg69 provides a ligand contact to substrate. Cys98 and Cys101 together coordinate Zn(2+). Residue Glu111 coordinates substrate. Cys116 and Cys119 together coordinate Zn(2+). Tyr124 provides a ligand contact to substrate. Residues 125–248 enclose the Nudix hydrolase domain; the sequence is PQIAPCIIVA…TVARRLIEDT (124 aa). Ala158, Glu174, and Glu178 together coordinate a divalent metal cation. The Nudix box motif lies at 159–180; sequence GFVEVGETLEQAVAREVMEESG. 192 to 199 contacts substrate; sequence QPWPFPQS. Glu219 lines the a divalent metal cation pocket. Ala241 serves as a coordination point for substrate.

It belongs to the Nudix hydrolase family. NudC subfamily. Homodimer. Mg(2+) serves as cofactor. Mn(2+) is required as a cofactor. Requires Zn(2+) as cofactor.

The enzyme catalyses a 5'-end NAD(+)-phospho-ribonucleoside in mRNA + H2O = a 5'-end phospho-adenosine-phospho-ribonucleoside in mRNA + beta-nicotinamide D-ribonucleotide + 2 H(+). It catalyses the reaction NAD(+) + H2O = beta-nicotinamide D-ribonucleotide + AMP + 2 H(+). The catalysed reaction is NADH + H2O = reduced beta-nicotinamide D-ribonucleotide + AMP + 2 H(+). MRNA decapping enzyme that specifically removes the nicotinamide adenine dinucleotide (NAD) cap from a subset of mRNAs by hydrolyzing the diphosphate linkage to produce nicotinamide mononucleotide (NMN) and 5' monophosphate mRNA. The NAD-cap is present at the 5'-end of some mRNAs and stabilizes RNA against 5'-processing. Has preference for mRNAs with a 5'-end purine. Catalyzes the hydrolysis of a broad range of dinucleotide pyrophosphates. This Salmonella heidelberg (strain SL476) protein is NAD-capped RNA hydrolase NudC.